Reading from the N-terminus, the 149-residue chain is F420H(2)-dependent quinone reductase MT1299 (149 aa).

Coenzyme F420-(gamma-Glu)n-binding positions include 48–50 (AKT), 54–59 (RTTSLT), 70–73 (VASK), 81–85 (GWYHN), and Y130.

The protein belongs to the F420H(2)-dependent quinone reductase family.

It localises to the cell membrane. It carries out the reaction oxidized coenzyme F420-(gamma-L-Glu)(n) + a quinol + H(+) = reduced coenzyme F420-(gamma-L-Glu)(n) + a quinone. In terms of biological role, involved in a F420-dependent anti-oxidant mechanism that protects M.tuberculosis against oxidative stress and bactericidal agents. Catalyzes the F420H(2)-dependent two-electron reduction of quinones to dihydroquinones, thereby preventing the formation of cytotoxic semiquinones obtained by the one-electron reduction pathway. In vitro, catalyzes the reduction of menadione to menadiol; since menaquinone is the sole quinone electron carrier in the respiratory chain in M.tuberculosis, the physiological electron acceptor for Fqr-mediated F420H(2) oxidation is therefore likely to be the endogenous menaquinone found in the membrane fraction of M.tuberculosis. In Mycobacterium tuberculosis (strain CDC 1551 / Oshkosh), this protein is F420H(2)-dependent quinone reductase MT1299.